Here is a 369-residue protein sequence, read N- to C-terminus: 3-dehydroquinate synthase (369 aa).

NAD(+) is bound by residues 75 to 80 (DGEEHK), 109 to 113 (GVIGD), 133 to 134 (TT), K146, K155, and 173 to 176 (TLKT). Positions 188, 251, and 268 each coordinate Zn(2+).

This sequence belongs to the sugar phosphate cyclases superfamily. Dehydroquinate synthase family. Co(2+) serves as cofactor. It depends on Zn(2+) as a cofactor. NAD(+) is required as a cofactor.

It localises to the cytoplasm. The catalysed reaction is 7-phospho-2-dehydro-3-deoxy-D-arabino-heptonate = 3-dehydroquinate + phosphate. It functions in the pathway metabolic intermediate biosynthesis; chorismate biosynthesis; chorismate from D-erythrose 4-phosphate and phosphoenolpyruvate: step 2/7. Catalyzes the conversion of 3-deoxy-D-arabino-heptulosonate 7-phosphate (DAHP) to dehydroquinate (DHQ). This Legionella pneumophila (strain Paris) protein is 3-dehydroquinate synthase.